Consider the following 68-residue polypeptide: U-reduvitoxin-Pr3a (68 aa).

An N-terminal signal peptide occupies residues 1-22 (MKAGMKLVLVLVIASIALLALA). Intrachain disulfides connect Cys29-Cys47, Cys36-Cys52, and Cys46-Cys59.

The protein belongs to the venom Ptu1-like knottin family. As to expression, expressed by the venom gland.

The protein localises to the secreted. In terms of biological role, binds reversibly and blocks P/Q-type voltage-gated calcium channels (Cav). This chain is U-reduvitoxin-Pr3a, found in Platymeris rhadamanthus (Red spot assassin bug).